Reading from the N-terminus, the 457-residue chain is Phosphoglucosamine mutase (457 aa).

S109 functions as the Phosphoserine intermediate in the catalytic mechanism. Residues S109, D251, D253, and D255 each coordinate Mg(2+). The residue at position 109 (S109) is a Phosphoserine.

It belongs to the phosphohexose mutase family. It depends on Mg(2+) as a cofactor. Post-translationally, activated by phosphorylation.

It catalyses the reaction alpha-D-glucosamine 1-phosphate = D-glucosamine 6-phosphate. In terms of biological role, catalyzes the conversion of glucosamine-6-phosphate to glucosamine-1-phosphate. The protein is Phosphoglucosamine mutase of Bdellovibrio bacteriovorus (strain ATCC 15356 / DSM 50701 / NCIMB 9529 / HD100).